Reading from the N-terminus, the 504-residue chain is D-alanine--D-alanyl carrier protein ligase (504 aa).

Position 152 to 153 (152 to 153 (TS)) interacts with ATP. Aspartate 197 is a binding site for D-alanine. 292-297 (NTYGPT) contacts ATP. Residue valine 301 participates in D-alanine binding. ATP contacts are provided by residues aspartate 383, 394-397 (YNGR), and lysine 492. Lysine 492 provides a ligand contact to D-alanine.

It belongs to the ATP-dependent AMP-binding enzyme family. DltA subfamily.

The protein resides in the cytoplasm. The catalysed reaction is holo-[D-alanyl-carrier protein] + D-alanine + ATP = D-alanyl-[D-alanyl-carrier protein] + AMP + diphosphate. It functions in the pathway cell wall biogenesis; lipoteichoic acid biosynthesis. In terms of biological role, catalyzes the first step in the D-alanylation of lipoteichoic acid (LTA), the activation of D-alanine and its transfer onto the D-alanyl carrier protein (Dcp) DltC. In an ATP-dependent two-step reaction, forms a high energy D-alanyl-AMP intermediate, followed by transfer of the D-alanyl residue as a thiol ester to the phosphopantheinyl prosthetic group of the Dcp. D-alanylation of LTA plays an important role in modulating the properties of the cell wall in Gram-positive bacteria, influencing the net charge of the cell wall. The chain is D-alanine--D-alanyl carrier protein ligase from Bacillus mycoides (strain KBAB4) (Bacillus weihenstephanensis).